The sequence spans 465 residues: GTPase Der (465 aa).

2 EngA-type G domains span residues 3 to 166 (FLVA…LNEY) and 184 to 358 (IHFS…ACAS). Residues 9 to 16 (GRANVGKS), 56 to 60 (DTGGI), 118 to 121 (NKVD), 190 to 197 (GRPNVGKS), 237 to 241 (DTAGV), and 302 to 305 (NKWD) each bind GTP. Residues 359 to 443 (KKITTADATR…PIVFEFKQSE (85 aa)) enclose the KH-like domain. A disordered region spans residues 446-465 (FADRKNKRSKDEGSKSKKVK).

Belongs to the TRAFAC class TrmE-Era-EngA-EngB-Septin-like GTPase superfamily. EngA (Der) GTPase family. Associates with the 50S ribosomal subunit.

Its function is as follows. GTPase that plays an essential role in the late steps of ribosome biogenesis. The sequence is that of GTPase Der from Francisella tularensis subsp. tularensis (strain FSC 198).